The following is a 322-amino-acid chain: Ras association domain-containing protein 4 (322 aa).

The tract at residues 96 to 161 (EASPQDSKVP…SKSRAPSEAQ (66 aa)) is disordered. Ser-142 carries the phosphoserine modification. A Ras-associating domain is found at 175 to 264 (YNHKTSVFTP…KIFLMEADLS (90 aa)). One can recognise an SARAH domain in the interval 271 to 318 (VAQYIKFEMPVLDSFVEKLKEEEEREIIKLTMKFQALRLTMLQRLEQL).

As to quaternary structure, interacts directly with activated KRAS in a GTP-dependent manner.

Its function is as follows. Potential tumor suppressor. May act as a KRAS effector protein. May promote apoptosis and cell cycle arrest. The protein is Ras association domain-containing protein 4 (Rassf4) of Mus musculus (Mouse).